Here is a 365-residue protein sequence, read N- to C-terminus: G-protein coupled receptor 68 (365 aa).

Residues 1-12 (MGNITADNSSMS) are Extracellular-facing. N3 and N8 each carry an N-linked (GlcNAc...) asparagine glycan. The helical transmembrane segment at 13–49 (CTIDHTIHQTLAPVVYVTVLVVGFPANCLSLYFGYLQ) threads the bilayer. 2 cysteine pairs are disulfide-bonded: C13/C258 and C94/C172. The Cytoplasmic portion of the chain corresponds to 50 to 53 (IKAR). The helical transmembrane segment at 54 to 84 (NELGVYLCNLTVADLFYICSLPFWLQYVLQH) threads the bilayer. At 85 to 89 (DNWSH) the chain is on the extracellular side. A helical transmembrane segment spans residues 90-125 (GDLSCQVCGILLYENIYISVGFLCCISVDRYLAVAH). Topologically, residues 126–133 (PFRFHQFR) are cytoplasmic. Residues 134–160 (TLKAAVGVSVVIWAKELLTSIYFLMHE) traverse the membrane as a helical segment. The Extracellular segment spans residues 161 to 176 (EVIEDENQHRVCFEHY). The segment at 161–176 (EVIEDENQHRVCFEHY) is extracellular loop 2 (ECL2). The helical transmembrane segment at 177 to 214 (PIQAWQRAINYYRFLVGFLFPICLLLASYQGILRAVRR) threads the bilayer. The Cytoplasmic segment spans residues 215–218 (SHGT). A helical membrane pass occupies residues 219 to 254 (QKSRKDQIQRLVLSTVVIFLACFLPYHVLLLVRSVW). Residues 255-260 (EASCDF) lie on the Extracellular side of the membrane. A helical membrane pass occupies residues 261–289 (AKGVFNAYHFSLLLTSFNCVADPVLYCFV). Residues 290–365 (SETTHRDLAR…SGGFPTGRLA (76 aa)) lie on the Cytoplasmic side of the membrane. The disordered stretch occupies residues 345–365 (HPAFQTPNSPGSGGFPTGRLA). A compositionally biased stretch (gly residues) spans 355–365 (GSGGFPTGRLA).

Belongs to the G-protein coupled receptor 1 family. As to expression, found at low level in a wide range of tissues, but significantly expressed in lung, kidney, bone and nervous system.

The protein localises to the cell membrane. With respect to regulation, activated by a network of residues that connects an extracellular-facing cavity to Glu-149, a conserved charged residue buried in the transmembrane core of the receptor. Protonation likely drives conformational changes in extracellular loop 2 (ECL2), which stabilizes movement of transmembrane 3 (TM3) and a series of rearrangements that connect the extracellular-facing cavity to Glu-149, a residue only conserved in proton-sensing G-protein coupled receptors. Activated in an allosteric manner by divalent metal ions at the extracellular surface following the order: Cd(2+) &gt; Co(2+) &gt; Ni(2+) &gt; Zn(2+) &gt; Fe(2+) &gt; Ca(2+) &gt; Mg(2+). Activated by the benzodiazepine drug lorazepam, a non-selective GPR68 positive allosteric modulator. Activated by ogerin (ZINC67740571), a selective GPR68 positive allosteric modulator. Activated by small molecule MS48107, a selective positive allosteric modulator. Inhibited by small molecule ogremorphin, inducing ferroptosis in cancer cells. Proton-sensing G-protein coupled receptor activated by extracellular pH, which is required to monitor pH changes and generate adaptive reactions. The receptor is almost silent at pH 7.8 but fully activated at pH 6.8. Ligand binding causes a conformation change that triggers signaling via guanine nucleotide-binding proteins (G proteins) and modulates the activity of downstream effectors, such as phospholipase C. GPR68 is mainly coupled to G(q) G proteins and mediates production of diacylglycerol (DAG) and inositol 1,4,5-trisphosphate (IP3). Acts as a key mechanosensor of fluid shear stress and membrane stretch. Expressed in endothelial cells of small-diameter resistance arteries, where it mediates flow-induced dilation in response to shear stress. May represents an osteoblastic pH sensor regulating cell-mediated responses to acidosis in bone. Acts as a regulator of calcium-sensing receptor CASR in a seesaw manner: GPR68-mediated signaling inhibits CASR signaling in response to protons, while CASR inhibits GPR68 in presence of extracellular calcium. This chain is G-protein coupled receptor 68, found in Homo sapiens (Human).